The sequence spans 177 residues: Cyclic pyranopterin monophosphate synthase (177 aa).

Residues 89–91 and 125–126 each bind substrate; these read LCH and ME. Residue Asp140 is part of the active site.

This sequence belongs to the MoaC family. In terms of assembly, homohexamer; trimer of dimers.

It carries out the reaction (8S)-3',8-cyclo-7,8-dihydroguanosine 5'-triphosphate = cyclic pyranopterin phosphate + diphosphate. It participates in cofactor biosynthesis; molybdopterin biosynthesis. Its function is as follows. Catalyzes the conversion of (8S)-3',8-cyclo-7,8-dihydroguanosine 5'-triphosphate to cyclic pyranopterin monophosphate (cPMP). This Streptomyces griseus subsp. griseus (strain JCM 4626 / CBS 651.72 / NBRC 13350 / KCC S-0626 / ISP 5235) protein is Cyclic pyranopterin monophosphate synthase.